The primary structure comprises 342 residues: MLLLTLESSCDETSAAVVRDGRQVLSNVIASQIDVHALYGGVVPELASRKHMEAVAVVVDDALRQARVALGDIEGIAVTRGPGLVGALLVGLSMAKAMAMSLDIPLVGVHHMEGHILAPLLEQDVPFPYLALAVSGGHTHLYRVDGIGRYRIVGRTLDDAAGEAFDKVSKLLGLGYPGGAVIDRLAAEGNPKAFDFPRPLLKKPNFDFSFSGIKTALLYYAQSQKGPIEGDHLRDVAASFQQAVVEVLCKKTLRAARETGLQRIVVAGGVACNKGLRRMMGERSAKEGFQVFFPSPGLCADNAAMLGVAGDAYLAGGCTSDLDLNARSNWPLDQAGWPQPCR.

His111 and His115 together coordinate Fe cation. Residues 133-137 (AVSGG), Asp166, Gly179, Asp183, and Asn273 each bind substrate. Asp301 provides a ligand contact to Fe cation.

Belongs to the KAE1 / TsaD family. The cofactor is Fe(2+).

It is found in the cytoplasm. It catalyses the reaction L-threonylcarbamoyladenylate + adenosine(37) in tRNA = N(6)-L-threonylcarbamoyladenosine(37) in tRNA + AMP + H(+). Required for the formation of a threonylcarbamoyl group on adenosine at position 37 (t(6)A37) in tRNAs that read codons beginning with adenine. Is involved in the transfer of the threonylcarbamoyl moiety of threonylcarbamoyl-AMP (TC-AMP) to the N6 group of A37, together with TsaE and TsaB. TsaD likely plays a direct catalytic role in this reaction. The sequence is that of tRNA N6-adenosine threonylcarbamoyltransferase from Syntrophotalea carbinolica (strain DSM 2380 / NBRC 103641 / GraBd1) (Pelobacter carbinolicus).